The primary structure comprises 356 residues: Heparan sulfate 2-O-sulfotransferase 1 (356 aa).

Residues 1–11 (MGLLRIMMPPK) lie on the Cytoplasmic side of the membrane. Residues 12–28 (LQLLAVVAFAVAMLFLE) traverse the membrane as a helical; Signal-anchor for type II membrane protein segment. Residues 24-51 (MLFLENQIQKLEESRAKLERAIARHEVR) are a coiled coil. Topologically, residues 29–356 (NQIQKLEESR…FYEKIYPKSN (328 aa)) are lumenal. Residues K83, T84, A85, S86, T87, and S88 each contribute to the adenosine 3',5'-bisphosphate site. 2 N-linked (GlcNAc...) asparagine glycosylation sites follow: N108 and N127. Residues H140 and H142 contribute to the active site. Residues R164 and S172 each contribute to the adenosine 3',5'-bisphosphate site. 2 disulfides stabilise this stretch: C201–C209 and C222–C228. Y279, S285, T290, and K293 together coordinate adenosine 3',5'-bisphosphate.

The protein belongs to the sulfotransferase 3 family. As to quaternary structure, homotrimer. Interacts with the C5-epimerase GLCE. In terms of processing, N-glycosylated. As to expression, widely expressed. Expressed at higher level in lung and brain. Weakly expressed in spleen.

The protein resides in the golgi apparatus membrane. Catalyzes the transfer of a sulfo group from 3'-phospho-5'-adenylyl sulfate (PAPS) to the 2-OH position of iduronic acid (IdoA) or glucuronic acid (GlcA) within the heparan sulfate (HS) chain and participates in HS biosynthesis. Required for metanephric development of kidney formation, suggesting that 2-O-sulfation within HS is essential for signaling between ureteric bud and metanephric mesenchyme. In Mus musculus (Mouse), this protein is Heparan sulfate 2-O-sulfotransferase 1.